Consider the following 1004-residue polypeptide: Putative helicase MOV-10 (1004 aa).

An N6-acetyllysine modification is found at lysine 148. A Phosphothreonine modification is found at threonine 254. Serine 433 carries the post-translational modification Phosphoserine. 525–532 (GPPGTGKT) contacts ATP. The DEAG box signature appears at 646–649 (DEAG). Positions 922–966 (NPLLLGHDPDWKTFLEFCKENGGYTGCPFPAKLDLQQGQDLLQGL) are interaction with AGO2 and APOBEC3G. The disordered stretch occupies residues 966-1004 (LSKLSPSTSGPRRHQNLPQEREGEGGLPLQVEPEWRNEL). The residue at position 970 (serine 970) is a Phosphoserine.

This sequence belongs to the DNA2/NAM7 helicase family. SDE3 subfamily. As to quaternary structure, interacts with DICER1, AGO2, TARBP2, EIF6 and RPL7A (60S ribosome subunit); they form a large RNA-induced silencing complex (RISC). Interacts with APOBEC3G in an RNA-dependent manner. Interacts with TRIM71 (via NHL repeats) in an RNA-dependent manner. Interacts with both protein products of LIRE1, ORF1p and ORF2p. Interacts with TUT4 and, to a lesser extent, TUT7; the interactions are RNA-dependent. Interacts with AGO2, TNRC6B and UPF1; the interactions are direct and RNA-dependent. Interacts with FMR1; this interaction is direct, occurs in an RNA-dependent manner on polysomes and induces association of MOV10 with RNAs. Interacts with SHFL; the interaction increases in presence of RNA. Interacts with DHX34; the interaction is RNA-independent. Interacts with RBM46. In terms of processing, ubiquitinated by the DCX(DCAF12) complex that specifically recognizes the glutamate-leucine (Glu-Leu) degron at the C-terminus, leading to its degradation.

It localises to the cytoplasm. Its subcellular location is the P-body. It is found in the nucleus. The protein resides in the cytoplasmic ribonucleoprotein granule. The protein localises to the stress granule. The enzyme catalyses ATP + H2O = ADP + phosphate + H(+). Functionally, 5' to 3' RNA helicase that is involved in a number of cellular roles ranging from mRNA metabolism and translation, modulation of viral infectivity, inhibition of retrotransposition, or regulation of synaptic transmission. Plays an important role in innate antiviral immunity by promoting type I interferon production. Mechanistically, specifically uses IKKepsilon/IKBKE as the mediator kinase for IRF3 activation. Contributes to UPF1 mRNA target degradation by translocation along 3' UTRs. Required for microRNA (miRNA)-mediated gene silencing by the RNA-induced silencing complex (RISC). Required for both miRNA-mediated translational repression and miRNA-mediated cleavage of complementary mRNAs by RISC. In cooperation with FMR1, regulates miRNA-mediated translational repression by AGO2. Restricts retrotransposition of long interspersed element-1 (LINE-1) in cooperation with TUT4 and TUT7 counteracting the RNA chaperonne activity of L1RE1. Facilitates LINE-1 uridylation by TUT4 and TUT7. Required for embryonic viability and for normal central nervous system development and function. Plays two critical roles in early brain development: suppresses retroelements in the nucleus by directly inhibiting cDNA synthesis, while regulates cytoskeletal mRNAs to influence neurite outgrowth in the cytosol. May function as a messenger ribonucleoprotein (mRNP) clearance factor. This Mus musculus (Mouse) protein is Putative helicase MOV-10 (Mov10).